A 147-amino-acid polypeptide reads, in one-letter code: Small ribosomal subunit protein uS12 (147 aa).

It belongs to the universal ribosomal protein uS12 family. Part of the 30S ribosomal subunit.

With S4 and S5 plays an important role in translational accuracy. Located at the interface of the 30S and 50S subunits. This Thermococcus kodakarensis (strain ATCC BAA-918 / JCM 12380 / KOD1) (Pyrococcus kodakaraensis (strain KOD1)) protein is Small ribosomal subunit protein uS12.